The chain runs to 363 residues: MERITVNLAERSYPITIGAGLFEDSAHLSSLTAGQKVVVITNVTVAPLYADKILSLLQSLGCQASLLELPDGEQYKSLDTFNQVMSFLLEGSFARDVVVIALGGGVIGDLVGFSAACYQRGVDFIQIPTTLLSQVDSSVGGKTAVNHPLGKNMIGAFYQPKSVIIDTNCLKTLPEREFAAGIAEVIKYGIIYDAEFFTWLDEHLDALYSLDEQALTYAIARCCEIKAEVVAQDEKESGIRALLNLGHTFGHAIEAELGYGNWLHGEAVAAGTVMAARTAQLQGMIDQQQFDKIFSILSRAKLPVHTPESMTFDDFMTHMMRDKKVLSGKLRLVLPSSIGTAEVVADVPQEVIRQAIEDCRTIN.

NAD(+) contacts are provided by residues 71-76 (DGEQYK), 105-109 (GVIGD), 129-130 (TT), Lys142, Lys151, and 169-172 (CLKT). Residues Glu184, His247, and His264 each contribute to the Zn(2+) site.

The protein belongs to the sugar phosphate cyclases superfamily. Dehydroquinate synthase family. NAD(+) is required as a cofactor. Requires Co(2+) as cofactor. The cofactor is Zn(2+).

The protein localises to the cytoplasm. The enzyme catalyses 7-phospho-2-dehydro-3-deoxy-D-arabino-heptonate = 3-dehydroquinate + phosphate. It functions in the pathway metabolic intermediate biosynthesis; chorismate biosynthesis; chorismate from D-erythrose 4-phosphate and phosphoenolpyruvate: step 2/7. In terms of biological role, catalyzes the conversion of 3-deoxy-D-arabino-heptulosonate 7-phosphate (DAHP) to dehydroquinate (DHQ). The polypeptide is 3-dehydroquinate synthase (Vibrio vulnificus (strain CMCP6)).